Here is a 310-residue protein sequence, read N- to C-terminus: N-acetyl-gamma-glutamyl-phosphate reductase (310 aa).

Cys-117 is an active-site residue.

It belongs to the NAGSA dehydrogenase family. Type 2 subfamily.

Its subcellular location is the cytoplasm. The enzyme catalyses N-acetyl-L-glutamate 5-semialdehyde + phosphate + NADP(+) = N-acetyl-L-glutamyl 5-phosphate + NADPH + H(+). It functions in the pathway amino-acid biosynthesis; L-arginine biosynthesis; N(2)-acetyl-L-ornithine from L-glutamate: step 3/4. Its function is as follows. Catalyzes the NADPH-dependent reduction of N-acetyl-5-glutamyl phosphate to yield N-acetyl-L-glutamate 5-semialdehyde. The chain is N-acetyl-gamma-glutamyl-phosphate reductase from Allorhizobium ampelinum (strain ATCC BAA-846 / DSM 112012 / S4) (Agrobacterium vitis (strain S4)).